The sequence spans 129 residues: Large ribosomal subunit protein uL22 (129 aa).

It belongs to the universal ribosomal protein uL22 family. In terms of assembly, part of the 50S ribosomal subunit.

This protein binds specifically to 23S rRNA; its binding is stimulated by other ribosomal proteins, e.g. L4, L17, and L20. It is important during the early stages of 50S assembly. It makes multiple contacts with different domains of the 23S rRNA in the assembled 50S subunit and ribosome. Functionally, the globular domain of the protein is located near the polypeptide exit tunnel on the outside of the subunit, while an extended beta-hairpin is found that lines the wall of the exit tunnel in the center of the 70S ribosome. The sequence is that of Large ribosomal subunit protein uL22 from Prochlorococcus marinus (strain MIT 9211).